The sequence spans 159 residues: MPRETGRRLIAQNKRARHDYDILDTYEAGLVLRGTEVKALRAGRASLVDGFAQISDGEIWLHNVHIPEYTEGTWTNHAPRRKRKMLLHRAEIEKLVGKTQEGGLTLVPLSLYWKDGRAKIEIALARGRKSYDKRHAIAERDAAREIGRAMGRRAKGRYL.

This sequence belongs to the SmpB family.

It localises to the cytoplasm. In terms of biological role, required for rescue of stalled ribosomes mediated by trans-translation. Binds to transfer-messenger RNA (tmRNA), required for stable association of tmRNA with ribosomes. tmRNA and SmpB together mimic tRNA shape, replacing the anticodon stem-loop with SmpB. tmRNA is encoded by the ssrA gene; the 2 termini fold to resemble tRNA(Ala) and it encodes a 'tag peptide', a short internal open reading frame. During trans-translation Ala-aminoacylated tmRNA acts like a tRNA, entering the A-site of stalled ribosomes, displacing the stalled mRNA. The ribosome then switches to translate the ORF on the tmRNA; the nascent peptide is terminated with the 'tag peptide' encoded by the tmRNA and targeted for degradation. The ribosome is freed to recommence translation, which seems to be the essential function of trans-translation. This is SsrA-binding protein from Frankia casuarinae (strain DSM 45818 / CECT 9043 / HFP020203 / CcI3).